A 147-amino-acid chain; its full sequence is Large ribosomal subunit protein bL9 (147 aa).

Residues 40–60 (TTGNLKQHEAHERKAAEEAKQ) are disordered. Residues 45–59 (KQHEAHERKAAEEAK) are compositionally biased toward basic and acidic residues.

The protein belongs to the bacterial ribosomal protein bL9 family.

Functionally, binds to the 23S rRNA. This is Large ribosomal subunit protein bL9 from Exiguobacterium sibiricum (strain DSM 17290 / CCUG 55495 / CIP 109462 / JCM 13490 / 255-15).